Consider the following 348-residue polypeptide: Probable WRKY transcription factor 27 (348 aa).

Disordered stretches follow at residues 19 to 52, 67 to 90, 133 to 153, and 218 to 320; these read VSTT…ASSS, TTTT…SPSP, LLQQ…QQKR, and GEHT…LIPN. Residues 75–85 are compositionally biased toward pro residues; that stretch reads SPPPLLPPPKA. The span at 133-142 shows a compositional bias: low complexity; that stretch reads LLQQQSQPPL. The span at 143-153 shows a compositional bias: basic residues; it reads RSRKRKNQQKR. Positions 159–225 form a DNA-binding region, WRKY; the sequence is TQENLSSDLW…YTGEHTHPRP (67 aa). A compositionally biased stretch (polar residues) spans 228–242; that stretch reads RNSLAGSTRNKSQPV. The span at 274-315 shows a compositional bias: acidic residues; sequence DVQETNGDEDMVGQEVNMEEEEEEEEVEEDDEEEEDDDDVDD.

The protein belongs to the WRKY group II-e family.

The protein resides in the nucleus. Its function is as follows. Transcription factor. Interacts specifically with the W box (5'-(T)TGAC[CT]-3'), a frequently occurring elicitor-responsive cis-acting element. In Arabidopsis thaliana (Mouse-ear cress), this protein is Probable WRKY transcription factor 27 (WRKY27).